The following is a 311-amino-acid chain: MALPIMIDCDPGHDDAIALVLALASPELEVKAVTASAGNQTPEKTLRNVLRMLTLLNRPDIPVAGGAWKPLMRDLIIADNVHGESGLDGPSLPEPAFAPQNCTAVELMASVLRESQESVTLVATGPQTNVALLLASHPELHAKIARIVIMGGAMGLGNWQPAAEFNIYVDPQAAEMVFQSGIPVVMAGLDVTHRAQILPADIERFRQIGNPVSTIVAELLDFFMAYHKDEKWGFDGAPLHDPCTIAWLLKPEIFTTIERWVGVETEGKYTQGMTVVDYYHLTGNRPNTTLMLDVDREAFVDLLAQRLAFYA.

His-240 is an active-site residue.

The protein belongs to the IUNH family. RihA subfamily.

Hydrolyzes cytidine or uridine to ribose and cytosine or uracil, respectively. The polypeptide is Pyrimidine-specific ribonucleoside hydrolase RihA (Klebsiella pneumoniae subsp. pneumoniae (strain ATCC 700721 / MGH 78578)).